Reading from the N-terminus, the 24-residue chain is Ascaphin-4 (24 aa).

As to expression, expressed by the skin glands.

Its subcellular location is the secreted. Antimicrobial peptide that shows higher potency against Gram-negative bacteria than against Gram-positive bacteria. Has a very week hemolytic activity. The polypeptide is Ascaphin-4 (Ascaphus truei (Coastal tailed frog)).